We begin with the raw amino-acid sequence, 312 residues long: DNA-directed RNA polymerase subunit alpha (312 aa).

The segment at 1 to 226 (MIEFEKPIIT…EHLNLFTDLT (226 aa)) is alpha N-terminal domain (alpha-NTD). The interval 242 to 312 (NDEKLLDRTI…DLGLGLKNDK (71 aa)) is alpha C-terminal domain (alpha-CTD).

Belongs to the RNA polymerase alpha chain family. Homodimer. The RNAP catalytic core consists of 2 alpha, 1 beta, 1 beta' and 1 omega subunit. When a sigma factor is associated with the core the holoenzyme is formed, which can initiate transcription.

The enzyme catalyses RNA(n) + a ribonucleoside 5'-triphosphate = RNA(n+1) + diphosphate. In terms of biological role, DNA-dependent RNA polymerase catalyzes the transcription of DNA into RNA using the four ribonucleoside triphosphates as substrates. In Streptococcus thermophilus (strain CNRZ 1066), this protein is DNA-directed RNA polymerase subunit alpha.